We begin with the raw amino-acid sequence, 465 residues long: Iron-sulfur cluster assembly SufBD family protein SE_0610 (465 aa).

It belongs to the iron-sulfur cluster assembly SufBD family.

The chain is Iron-sulfur cluster assembly SufBD family protein SE_0610 from Staphylococcus epidermidis (strain ATCC 12228 / FDA PCI 1200).